The following is a 340-amino-acid chain: Nod factor export ATP-binding protein I (340 aa).

The span at 1-24 (MLKRKLGPEDLRRLETPAIERESH) shows a compositional bias: basic and acidic residues. Residues 1–34 (MLKRKLGPEDLRRLETPAIERESHGQTSAKSSVP) are disordered. A compositionally biased stretch (polar residues) spans 25 to 34 (GQTSAKSSVP). The region spanning 42-272 (VDFAGVTKSY…HIGCQVMEIY (231 aa)) is the ABC transporter domain. ATP is bound at residue 74–81 (GPNGAGKS).

It belongs to the ABC transporter superfamily. Lipooligosaccharide exporter (TC 3.A.1.102) family. The complex is composed of two ATP-binding proteins (NodI) and two transmembrane proteins (NodJ).

The protein resides in the cell inner membrane. In terms of biological role, part of the ABC transporter complex NodIJ involved in the export of the nodulation factors (Nod factors), the bacterial signal molecules that induce symbiosis and subsequent nodulation induction. Nod factors are LCO (lipo-chitin oligosaccharide), a modified beta-1,4-linked N-acetylglucosamine oligosaccharide. This subunit is responsible for energy coupling to the transport system. This Mesorhizobium japonicum (strain LMG 29417 / CECT 9101 / MAFF 303099) (Mesorhizobium loti (strain MAFF 303099)) protein is Nod factor export ATP-binding protein I.